A 317-amino-acid chain; its full sequence is tRNA uridine(34) hydroxylase (317 aa).

The Rhodanese domain maps to 129–223 (TDPEVLLIDT…YLEEVPEQES (95 aa)). Residue C183 is the Cysteine persulfide intermediate of the active site. A disordered region spans residues 298-317 (AKARNQPHPIGRNYRLPSEA).

The protein belongs to the TrhO family.

The enzyme catalyses uridine(34) in tRNA + AH2 + O2 = 5-hydroxyuridine(34) in tRNA + A + H2O. Catalyzes oxygen-dependent 5-hydroxyuridine (ho5U) modification at position 34 in tRNAs. This Pseudomonas syringae pv. tomato (strain ATCC BAA-871 / DC3000) protein is tRNA uridine(34) hydroxylase.